Consider the following 165-residue polypeptide: Deoxyuridine 5'-triphosphate nucleotidohydrolase (165 aa).

Belongs to the dUTPase family. As to quaternary structure, homotrimer. Mg(2+) serves as cofactor.

The protein localises to the host cytoplasm. The protein resides in the virion. The catalysed reaction is dUTP + H2O = dUMP + diphosphate + H(+). In terms of biological role, the viral dUTPase may play a role in lowering the dUTP concentration in natural infections to minimize misincorporation of deoxyuridine into the viral DNA and ensure the fidelity of genome replication. This is Deoxyuridine 5'-triphosphate nucleotidohydrolase from African swine fever virus (isolate Tick/South Africa/Pretoriuskop Pr4/1996) (ASFV).